Consider the following 271-residue polypeptide: Ribosomal RNA small subunit methyltransferase A (271 aa).

S-adenosyl-L-methionine-binding residues include histidine 18, leucine 20, glycine 45, glutamate 66, aspartate 91, and asparagine 113.

The protein belongs to the class I-like SAM-binding methyltransferase superfamily. rRNA adenine N(6)-methyltransferase family. RsmA subfamily.

It is found in the cytoplasm. The enzyme catalyses adenosine(1518)/adenosine(1519) in 16S rRNA + 4 S-adenosyl-L-methionine = N(6)-dimethyladenosine(1518)/N(6)-dimethyladenosine(1519) in 16S rRNA + 4 S-adenosyl-L-homocysteine + 4 H(+). Its function is as follows. Specifically dimethylates two adjacent adenosines (A1518 and A1519) in the loop of a conserved hairpin near the 3'-end of 16S rRNA in the 30S particle. May play a critical role in biogenesis of 30S subunits. This Baumannia cicadellinicola subsp. Homalodisca coagulata protein is Ribosomal RNA small subunit methyltransferase A.